A 115-amino-acid chain; its full sequence is Large ribosomal subunit protein bL20 (115 aa).

This sequence belongs to the bacterial ribosomal protein bL20 family.

Functionally, binds directly to 23S ribosomal RNA and is necessary for the in vitro assembly process of the 50S ribosomal subunit. It is not involved in the protein synthesizing functions of that subunit. This Borrelia turicatae (strain 91E135) protein is Large ribosomal subunit protein bL20.